The chain runs to 214 residues: Redox-sensing transcriptional repressor Rex (214 aa).

The H-T-H motif DNA-binding region spans 18-57; that stretch reads LYYRLVNQLHEKGIDRVNSKTISEALDIDSASIRRDFSYF. 92–97 contributes to the NAD(+) binding site; sequence GVGNLG.

This sequence belongs to the transcriptional regulatory Rex family. As to quaternary structure, homodimer.

The protein resides in the cytoplasm. In terms of biological role, modulates transcription in response to changes in cellular NADH/NAD(+) redox state. The protein is Redox-sensing transcriptional repressor Rex of Staphylococcus carnosus (strain TM300).